The chain runs to 331 residues: Putative sigma L-dependent transcriptional regulator YplP (331 aa).

The 202-residue stretch at 12–213 (HLIGEHQTFL…LKNAADYMAA (202 aa)) folds into the Sigma-54 factor interaction domain. 95-104 (AVRGTLFLDD) contributes to the ATP binding site.

Its function is as follows. May play a role in cold adaptation. This is Putative sigma L-dependent transcriptional regulator YplP (yplP) from Bacillus subtilis (strain 168).